A 305-amino-acid polypeptide reads, in one-letter code: MNQIQVFISGLILLLPGAVESHTAVQGLAGHPVTLPCIYSTHLGGIVPMCWGLGECRHSYCIRSLIWTNGYTVTHQRNSLYQLKGNISEGNVSLTIENTVVGDGGPYCCVVEIPGAFHFVDYMLEVKPEISTSPPTRPTATGRPTTISTRSTHVPTSTRVSTSTSPTPAHTETYKPEATTFYPDQTTAEVTETLPDTPADWHNTVTSSDDPWDDNTEVIPPQKPQKNLNKGFYVGISIAALLILMLLSTMVITRYVVMKRKSESLSFVAFPISKIGASPKKVVERTRCEDQVYIIEDTPYPEEES.

The first 21 residues, 1–21 (MNQIQVFISGLILLLPGAVES), serve as a signal peptide directing secretion. The region spanning 22 to 125 (HTAVQGLAGH…AFHFVDYMLE (104 aa)) is the Ig-like V-type domain. Topologically, residues 22 to 231 (HTAVQGLAGH…QKPQKNLNKG (210 aa)) are extracellular. Intrachain disulfides connect Cys-37-Cys-109, Cys-50-Cys-61, and Cys-56-Cys-108. N-linked (GlcNAc...) asparagine glycosylation is found at Asn-86 and Asn-91. The disordered stretch occupies residues 130–174 (ISTSPPTRPTATGRPTTISTRSTHVPTSTRVSTSTSPTPAHTETY). Over residues 131 to 167 (STSPPTRPTATGRPTTISTRSTHVPTSTRVSTSTSPT) the composition is skewed to low complexity. Residues 232–252 (FYVGISIAALLILMLLSTMVI) form a helical membrane-spanning segment. Residues 253-305 (TRYVVMKRKSESLSFVAFPISKIGASPKKVVERTRCEDQVYIIEDTPYPEEES) are Cytoplasmic-facing.

This sequence belongs to the immunoglobulin superfamily. TIM family. In terms of assembly, homodimer. Expressed on late differentiated Th2 cells. Expressed also on all splenic B-cells, with increased levels on germinal center B-cells, in the liver, especially in bile duct epithelial cells, and in renal tubule cells. Within retina, mainly expressed in Mueller cells.

It localises to the cell membrane. Functionally, cell surface glycoprotein that participates in iron homeostasis in the liver, the kidney, the retina and oligodendrocytes by acting as a receptor of H-ferritin. Mechanistically, mediates iron-containing ferritin uptake via an endocytic pathway, trafficking to endosomes and subsequently to lysosomes. Plays also an important role in the regulation of Th2 immunity. Receptor for SEMA4A involved in the regulation of T-cell function, enhancing T-cell activation. The chain is T-cell immunoglobulin and mucin domain-containing protein 2 (Timd2) from Mus musculus (Mouse).